The primary structure comprises 131 residues: Small ribosomal subunit protein uS8 (131 aa).

It belongs to the universal ribosomal protein uS8 family. As to quaternary structure, part of the 30S ribosomal subunit. Contacts proteins S5 and S12.

In terms of biological role, one of the primary rRNA binding proteins, it binds directly to 16S rRNA central domain where it helps coordinate assembly of the platform of the 30S subunit. The protein is Small ribosomal subunit protein uS8 of Sulfurovum sp. (strain NBC37-1).